Reading from the N-terminus, the 207-residue chain is Large ribosomal subunit protein uL4 (207 aa).

The tract at residues 47–77 (GTADTKTRAEVSGGGRKPWRQKGTGRARHGS) is disordered. The segment covering 63–77 (KPWRQKGTGRARHGS) has biased composition (basic residues).

It belongs to the universal ribosomal protein uL4 family. As to quaternary structure, part of the 50S ribosomal subunit.

Functionally, one of the primary rRNA binding proteins, this protein initially binds near the 5'-end of the 23S rRNA. It is important during the early stages of 50S assembly. It makes multiple contacts with different domains of the 23S rRNA in the assembled 50S subunit and ribosome. Forms part of the polypeptide exit tunnel. The chain is Large ribosomal subunit protein uL4 from Symbiobacterium thermophilum (strain DSM 24528 / JCM 14929 / IAM 14863 / T).